The chain runs to 253 residues: Sulfate transporter CysZ (253 aa).

4 helical membrane passes run 31–51, 75–95, 151–171, and 222–242; these read FVIL…WWLF, LLWP…FSTI, IVLL…PVLW, and IPLL…AMWV.

It belongs to the CysZ family.

It localises to the cell inner membrane. Functionally, high affinity, high specificity proton-dependent sulfate transporter, which mediates sulfate uptake. Provides the sulfur source for the cysteine synthesis pathway. The chain is Sulfate transporter CysZ from Escherichia coli O8 (strain IAI1).